Consider the following 416-residue polypeptide: Putative F-box/kelch-repeat protein At1g12870 (416 aa).

One can recognise an F-box domain in the interval 27 to 76 (MIASSSLPDDVVEEIFLKLPVKALMRFKSLSKQWRSTLESCYFSQRHLKI). Kelch repeat units lie at residues 199 to 243 (LVWL…PASA) and 297 to 341 (CMYE…HVLD).

This Arabidopsis thaliana (Mouse-ear cress) protein is Putative F-box/kelch-repeat protein At1g12870.